We begin with the raw amino-acid sequence, 213 residues long: NAD(P)H-hydrate epimerase (213 aa).

The region spanning 8–210 is the YjeF N-terminal domain; it reads MYNIEENGHA…KIGIPPEAEK (203 aa). Residue 55–59 coordinates (6S)-NADPHX; that stretch reads NNGGD. 2 residues coordinate K(+): N56 and D122. (6S)-NADPHX-binding positions include 126–132, Y137, and D155; that span reads GTGITGE. S158 provides a ligand contact to K(+).

It belongs to the NnrE/AIBP family. It depends on K(+) as a cofactor.

It catalyses the reaction (6R)-NADHX = (6S)-NADHX. The catalysed reaction is (6R)-NADPHX = (6S)-NADPHX. Its function is as follows. Catalyzes the epimerization of the S- and R-forms of NAD(P)HX, a damaged form of NAD(P)H that is a result of enzymatic or heat-dependent hydration. This is a prerequisite for the S-specific NAD(P)H-hydrate dehydratase to allow the repair of both epimers of NAD(P)HX. The polypeptide is NAD(P)H-hydrate epimerase (Cenarchaeum symbiosum (strain A)).